The primary structure comprises 561 residues: MNDEGDLAQEDTTKDEANSTEGSRVNKLKRTRRKVTKPHLCSADGDEITMANSREMSRNQTADLSKPGSAESWSWHNAKDAQDQIPVVKSSLPSAGAPDAEFNPNTDHTRDNAQSLILPQLSSRMKHIKQEMAKNHLQFVRFEATDLHGVSRSKSIPAQFFQEKVIHGVFMPRGYLELMPNPKDNEVNHIRATCFNSDIVLMPELSTFRVLPWAERTARVICDTFTVTGEPLLTSPRYIAKRQLRQLQDAGFSLLSAFIYDFCIFGVPEVINSKTISFPASTLLSNHDQPFMQELVDGLYHTGANVESFSSSTRPGQMEICFLPEFGISSADNAFTLRTGVQEVARRYNYIASLVIETGFCNSGILSHSIWDVSGKTNMFYSGSGVERLTLTGKKWLAGLLKHSAALSCLMAPAVNCRKRYCKDSRDLKDSVPTTWGYNDNSCALNVKCHGEKGTQIENKLGSATANPYLVLAATVAAGLDGLQSSDGAAAESDESQDLYQPEPSEIPLKMEDALAALEQDECLKQALGETFIRYFVAMKKYELENEETDAEGNKFLEYFI.

Disordered stretches follow at residues 1–78 (MNDE…WHNA) and 91–112 (SLPSAGAPDAEFNPNTDHTRDN). Basic residues predominate over residues 26–37 (NKLKRTRRKVTK). Over residues 50 to 63 (MANSREMSRNQTAD) the composition is skewed to polar residues. The 95-residue stretch at 135-229 (NHLQFVRFEA…VICDTFTVTG (95 aa)) folds into the GS beta-grasp domain. The GS catalytic domain occupies 236 to 561 (PRYIAKRQLR…EGNKFLEYFI (326 aa)).

It belongs to the glutamine synthetase family. As to quaternary structure, dodecamer. Interacts with BFSP2 and VIM. Expressed in lens.

Functionally, may act as a component of the cytoskeleton or as a chaperone for the reorganization of intermediate filament proteins during terminal differentiation in the lens. Does not seem to have enzymatic activity. The polypeptide is Lengsin (Lgsn) (Rattus norvegicus (Rat)).